A 631-amino-acid chain; its full sequence is RING finger protein 112 (631 aa).

An RING-type zinc finger spans residues 57–98 (CSICLERLREPISLDCGHDFCIRCFSTHRIPGCELPCCPECR). The tract at residues 131-631 (AVRAERLLLV…GDREPLLQEE (501 aa)) is interaction with ZBTB16. The region spanning 166 to 397 (DTPVCLLAVL…YISDVLSTAP (232 aa)) is the GB1/RHD3-type G domain. 317–318 (RD) is a GTP binding site. 2 helical membrane-spanning segments follow: residues 547-567 (LAAV…GVVG) and 580-600 (GMVA…GGGV).

This sequence belongs to the TRAFAC class dynamin-like GTPase superfamily. GB1/RHD3 GTPase family. GB1 subfamily. Self-associates. Interacts with SP1 in an oxidative stress-regulated manner. Interacts with SIGMAR1 in an oxidative stress-regulated manner. Interacts with ZBTB16 (via C2H2-type zinc finger domains 1 and 2). Auto-ubiquitinated. In terms of tissue distribution, predominantly expressed in brain.

The protein localises to the membrane. It is found in the cytoplasm. It localises to the nucleus. Its subcellular location is the nuclear body. The protein resides in the nucleoplasm. The protein localises to the endosome. It is found in the cytoplasmic vesicle. It localises to the secretory vesicle. Its subcellular location is the synaptic vesicle. The protein resides in the postsynaptic density. The protein localises to the perikaryon. It is found in the cell projection. It localises to the neuron projection. It carries out the reaction S-ubiquitinyl-[E2 ubiquitin-conjugating enzyme]-L-cysteine + [acceptor protein]-L-lysine = [E2 ubiquitin-conjugating enzyme]-L-cysteine + N(6)-ubiquitinyl-[acceptor protein]-L-lysine.. Its pathway is protein modification; protein ubiquitination. Its function is as follows. E3 ubiquitin-protein ligase that plays an important role in neuronal differentiation, including neurogenesis and gliogenesis, during brain development. During embryonic development initiates neuronal differentiation by inducing cell cycle arrest at the G0/G1 phase through up-regulation of cell-cycle regulatory proteins. Plays a role not only in the fetal period during the development of the nervous system, but also in the adult brain, where it is involved in the maintenance of neural functions and protection of the nervous tissue cells from oxidative stress-induced damage. Exhibits GTPase and E3 ubiquitin-protein ligase activities. Regulates dendritic spine density and synaptic neurotransmission; its ability to hydrolyze GTP is involved in the maintenance of dendritic spine density. This chain is RING finger protein 112 (Rnf112), found in Rattus norvegicus (Rat).